We begin with the raw amino-acid sequence, 367 residues long: Putative threonine-phosphate decarboxylase (367 aa).

Residues 12-13 (HG), asparagine 29, and asparagine 152 each bind O-phospho-L-threonine. Lysine 213 is modified (N6-(pyridoxal phosphate)lysine). Arginine 320 and arginine 334 together coordinate O-phospho-L-threonine.

The protein belongs to the class-II pyridoxal-phosphate-dependent aminotransferase family. Pyridoxal 5'-phosphate serves as cofactor.

It catalyses the reaction O-phospho-L-threonine + H(+) = (R)-1-aminopropan-2-yl phosphate + CO2. The protein operates within cofactor biosynthesis; adenosylcobalamin biosynthesis. Its function is as follows. Decarboxylates L-threonine-O-3-phosphate to yield (R)-1-amino-2-propanol O-2-phosphate, the precursor for the linkage between the nucleotide loop and the corrin ring in cobalamin. This is Putative threonine-phosphate decarboxylase (cobD) from Caldanaerobacter subterraneus subsp. tengcongensis (strain DSM 15242 / JCM 11007 / NBRC 100824 / MB4) (Thermoanaerobacter tengcongensis).